The primary structure comprises 256 residues: Small ribosomal subunit protein eS1 (256 aa).

Over residues M1–K18 the composition is skewed to basic residues. The interval M1–A20 is disordered. N-acetylalanine; partial is present on A2.

It belongs to the eukaryotic ribosomal protein eS1 family. In terms of assembly, component of the small ribosomal subunit. Mature ribosomes consist of a small (40S) and a large (60S) subunit. The 40S subunit contains about 33 different proteins and 1 molecule of RNA (18S). The 60S subunit contains about 49 different proteins and 3 molecules of RNA (25S, 5.8S and 5S).

Its subcellular location is the cytoplasm. The chain is Small ribosomal subunit protein eS1 from Podospora anserina (strain S / ATCC MYA-4624 / DSM 980 / FGSC 10383) (Pleurage anserina).